The primary structure comprises 147 residues: Arginine vasopressin-induced protein 1 (147 aa).

2 disordered regions span residues methionine 1 to lysine 24 and leucine 104 to histidine 147. Residues alanine 105 to tyrosine 119 are compositionally biased toward polar residues. The segment covering histidine 121–arginine 134 has biased composition (basic residues). The span at glycine 137–histidine 147 shows a compositional bias: polar residues.

Functionally, may be involved in MAP kinase activation, epithelial sodium channel (ENaC) down-regulation and cell cycling. This is Arginine vasopressin-induced protein 1 (AVPI1) from Homo sapiens (Human).